The following is an 818-amino-acid chain: Phenylalanine--tRNA ligase beta subunit (818 aa).

In terms of domain architecture, tRNA-binding spans A39–T148. One can recognise a B5 domain in the interval P423–S498. The Mg(2+) site is built by D476, D482, E485, and E486. The region spanning S724 to R817 is the FDX-ACB domain.

The protein belongs to the phenylalanyl-tRNA synthetase beta subunit family. Type 1 subfamily. As to quaternary structure, tetramer of two alpha and two beta subunits. Mg(2+) serves as cofactor.

The protein resides in the cytoplasm. The enzyme catalyses tRNA(Phe) + L-phenylalanine + ATP = L-phenylalanyl-tRNA(Phe) + AMP + diphosphate + H(+). This Rickettsia felis (strain ATCC VR-1525 / URRWXCal2) (Rickettsia azadi) protein is Phenylalanine--tRNA ligase beta subunit.